Here is a 241-residue protein sequence, read N- to C-terminus: Ubiquinone biosynthesis O-methyltransferase (241 aa).

S-adenosyl-L-methionine is bound by residues Arg-46, Gly-66, Asp-87, and Met-131.

It belongs to the methyltransferase superfamily. UbiG/COQ3 family.

The catalysed reaction is a 3-demethylubiquinol + S-adenosyl-L-methionine = a ubiquinol + S-adenosyl-L-homocysteine + H(+). It carries out the reaction a 3-(all-trans-polyprenyl)benzene-1,2-diol + S-adenosyl-L-methionine = a 2-methoxy-6-(all-trans-polyprenyl)phenol + S-adenosyl-L-homocysteine + H(+). It functions in the pathway cofactor biosynthesis; ubiquinone biosynthesis. In terms of biological role, O-methyltransferase that catalyzes the 2 O-methylation steps in the ubiquinone biosynthetic pathway. This chain is Ubiquinone biosynthesis O-methyltransferase, found in Bordetella pertussis (strain Tohama I / ATCC BAA-589 / NCTC 13251).